A 300-amino-acid polypeptide reads, in one-letter code: Tyrosine recombinase XerC (300 aa).

A Core-binding (CB) domain is found at 2 to 88 (TQEGKLEQQF…SLRSFYTFLL (87 aa)). The Tyr recombinase domain occupies 109-294 (RLPKFFYSEE…TKEHLKSTYM (186 aa)). Catalysis depends on residues R150, K174, H246, R249, and H272. Residue Y281 is the O-(3'-phospho-DNA)-tyrosine intermediate of the active site.

This sequence belongs to the 'phage' integrase family. XerC subfamily. Forms a cyclic heterotetrameric complex composed of two molecules of XerC and two molecules of XerD.

It localises to the cytoplasm. Functionally, site-specific tyrosine recombinase, which acts by catalyzing the cutting and rejoining of the recombining DNA molecules. The XerC-XerD complex is essential to convert dimers of the bacterial chromosome into monomers to permit their segregation at cell division. It also contributes to the segregational stability of plasmids. This Listeria welshimeri serovar 6b (strain ATCC 35897 / DSM 20650 / CCUG 15529 / CIP 8149 / NCTC 11857 / SLCC 5334 / V8) protein is Tyrosine recombinase XerC.